Here is a 732-residue protein sequence, read N- to C-terminus: Calcineurin-interacting protein 2 (732 aa).

Disordered stretches follow at residues 1–24, 115–169, 181–232, 310–351, 372–397, and 426–708; these read MNRG…REPY, DYEP…ALPK, QKKD…LDDR, ILSR…TSRR, RSQS…STVS, and QTVT…PLEE. Residues 8 to 17 are compositionally biased toward polar residues; that stretch reads YNRSRSTSSR. The segment covering 117–129 has biased composition (basic and acidic residues); that stretch reads EPLRKEPELKEQK. Composition is skewed to polar residues over residues 151–163 and 189–208; these read SGIT…SSRT and IPRQ…NNEL. Over residues 312-323 the composition is skewed to low complexity; that stretch reads SRSVSTSPSSVT. Residues 324-351 are compositionally biased toward polar residues; that stretch reads DNIPKTSTSRIPSSENPKTMEHTTTSRR. A compositionally biased stretch (polar residues) spans 426 to 439; it reads QTVTNVRVPSSRGS. Basic and acidic residues-rich tracts occupy residues 526-538 and 546-557; these read QSPE…RFAD and PGDHQAREEDLP. Polar residues predominate over residues 607–619; that stretch reads SVTPSEKSLPRNS. Residues 688-705 are compositionally biased toward low complexity; that stretch reads NSPNKSSSSSKARPSAAP.

As to quaternary structure, interacts with tax-6. Expressed in intestine.

The chain is Calcineurin-interacting protein 2 from Caenorhabditis elegans.